The primary structure comprises 1020 residues: Glycine dehydrogenase (decarboxylating), mitochondrial (1020 aa).

Residues 1–35 (MQSCARAWGLRLGRGVGGGRRLAGGSGPCWAPRSR) constitute a mitochondrion transit peptide. A disordered region spans residues 21 to 46 (RLAGGSGPCWAPRSRDSSSGGGDSAA). An N6-acetyllysine mark is found at Lys-447, Lys-514, Lys-648, and Lys-664. Lys-754 is subject to N6-(pyridoxal phosphate)lysine.

Belongs to the GcvP family. In terms of assembly, homodimer. Interacts with GCSH. The glycine cleavage system is composed of four proteins: P (GLDC), T (GCST), L (DLD) and H (GCSH). It depends on pyridoxal 5'-phosphate as a cofactor.

The protein resides in the mitochondrion. The enzyme catalyses N(6)-[(R)-lipoyl]-L-lysyl-[glycine-cleavage complex H protein] + glycine + H(+) = N(6)-[(R)-S(8)-aminomethyldihydrolipoyl]-L-lysyl-[glycine-cleavage complex H protein] + CO2. Its activity is regulated as follows. Stimulated by lipoic acid. Inhibited in presence of methylamine. The glycine cleavage system catalyzes the degradation of glycine. The P protein (GLDC) binds the alpha-amino group of glycine through its pyridoxal phosphate cofactor; CO(2) is released and the remaining methylamine moiety is then transferred to the lipoamide cofactor of the H protein (GCSH). In Homo sapiens (Human), this protein is Glycine dehydrogenase (decarboxylating), mitochondrial.